The chain runs to 282 residues: Small ribosomal subunit protein uS2 (282 aa).

A disordered region spans residues 260–282 (KRRRSKVYKEEEREVVTNEDESR). Residues 266-282 (VYKEEEREVVTNEDESR) show a composition bias toward basic and acidic residues.

Belongs to the universal ribosomal protein uS2 family.

The chain is Small ribosomal subunit protein uS2 from Wolbachia pipientis wMel.